We begin with the raw amino-acid sequence, 187 residues long: GTP cyclohydrolase 1 (187 aa).

Zn(2+)-binding residues include Cys-78, His-81, and Cys-150.

The protein belongs to the GTP cyclohydrolase I family. As to quaternary structure, homomer.

It catalyses the reaction GTP + H2O = 7,8-dihydroneopterin 3'-triphosphate + formate + H(+). It functions in the pathway cofactor biosynthesis; 7,8-dihydroneopterin triphosphate biosynthesis; 7,8-dihydroneopterin triphosphate from GTP: step 1/1. This Brevibacillus brevis (strain 47 / JCM 6285 / NBRC 100599) protein is GTP cyclohydrolase 1.